Consider the following 577-residue polypeptide: Isocitrate dehydrogenase kinase/phosphatase (577 aa).

Residues 318–324 (APGVRGM) and K339 each bind ATP. D374 is an active-site residue.

The protein belongs to the AceK family.

It is found in the cytoplasm. The enzyme catalyses L-seryl-[isocitrate dehydrogenase] + ATP = O-phospho-L-seryl-[isocitrate dehydrogenase] + ADP + H(+). Functionally, bifunctional enzyme which can phosphorylate or dephosphorylate isocitrate dehydrogenase (IDH) on a specific serine residue. This is a regulatory mechanism which enables bacteria to bypass the Krebs cycle via the glyoxylate shunt in response to the source of carbon. When bacteria are grown on glucose, IDH is fully active and unphosphorylated, but when grown on acetate or ethanol, the activity of IDH declines drastically concomitant with its phosphorylation. The polypeptide is Isocitrate dehydrogenase kinase/phosphatase (Pseudomonas aeruginosa (strain ATCC 15692 / DSM 22644 / CIP 104116 / JCM 14847 / LMG 12228 / 1C / PRS 101 / PAO1)).